We begin with the raw amino-acid sequence, 183 residues long: Ribulose bisphosphate carboxylase small subunit, chloroplastic 3 (183 aa).

The N-terminal 57 residues, 1 to 57 (MASSLMSNAATTMAAATTTAQANMVAPFNGLKSVSAFPVTRKNNDITSVASNGGRVQ), are a transit peptide targeting the chloroplast.

Belongs to the RuBisCO small chain family. As to quaternary structure, heterohexadecamer of 8 large and 8 small subunits.

The protein resides in the plastid. It localises to the chloroplast. Its function is as follows. RuBisCO catalyzes two reactions: the carboxylation of D-ribulose 1,5-bisphosphate, the primary event in carbon dioxide fixation, as well as the oxidative fragmentation of the pentose substrate. Both reactions occur simultaneously and in competition at the same active site. Although the small subunit is not catalytic it is essential for maximal activity. The sequence is that of Ribulose bisphosphate carboxylase small subunit, chloroplastic 3 from Mesembryanthemum crystallinum (Common ice plant).